We begin with the raw amino-acid sequence, 557 residues long: Copine-4 (557 aa).

C2 domains are found at residues 3-131 (KMSN…SKSL) and 137-264 (TAGK…VQWE). Ca(2+) contacts are provided by aspartate 170, aspartate 176, aspartate 232, aspartate 234, and aspartate 240. A VWFA domain is found at 305 to 507 (QIQFTVAIDF…VLRDIVQFVP (203 aa)).

This sequence belongs to the copine family. Interacts (via VWFA domain) with ACTB, BCOR, BICD2, CCDC22, CDC42BPB, CEP162, MYCBP2, NONO, PDCD6, PITPNM2, RDX, SKIL, SKT, SPTBN1, UBE2O and WTAP. Ca(2+) is required as a cofactor.

Probable calcium-dependent phospholipid-binding protein that may play a role in calcium-mediated intracellular processes. The sequence is that of Copine-4 from Mus musculus (Mouse).